We begin with the raw amino-acid sequence, 463 residues long: Major capsid protein (463 aa).

Belongs to the NCLDV major capsid protein family. Homotrimer.

The protein resides in the virion. Its function is as follows. Major capsid protein that self assembles to form an icosahedral capsid. Represents around 50% of the total virion protein mass. This is Major capsid protein (MCP) from Rana tigrina ranavirus.